Consider the following 179-residue polypeptide: NADH dehydrogenase [ubiquinone] 1 beta subcomplex subunit 9 (179 aa).

Ala2 bears the N-acetylalanine mark. Ser85 bears the Phosphoserine mark. The disordered stretch occupies residues Glu136–Asp162.

Belongs to the complex I LYR family. Mammalian complex I is composed of 45 different subunits.

It localises to the mitochondrion inner membrane. Functionally, accessory subunit of the mitochondrial membrane respiratory chain NADH dehydrogenase (Complex I), that is believed to be not involved in catalysis. Complex I functions in the transfer of electrons from NADH to the respiratory chain. The immediate electron acceptor for the enzyme is believed to be ubiquinone. The protein is NADH dehydrogenase [ubiquinone] 1 beta subcomplex subunit 9 (NDUFB9) of Pan troglodytes (Chimpanzee).